We begin with the raw amino-acid sequence, 90 residues long: MAVKIRLKRMGSKKKPFYRIVVADSRFPRDGRSIETIGTYNPLLDPVEVKIDEEATLKWMHNGAKPSDTVRNLLSREGIMEKFHNQKLGK.

It belongs to the bacterial ribosomal protein bS16 family.

This Listeria innocua serovar 6a (strain ATCC BAA-680 / CLIP 11262) protein is Small ribosomal subunit protein bS16.